The chain runs to 992 residues: Probable RNA-dependent RNA polymerase 3 (992 aa).

Residues 88 to 113 (PRLSPGESPVQSPRTPAKKSCRASQD) are disordered.

The protein belongs to the RdRP family.

The catalysed reaction is RNA(n) + a ribonucleoside 5'-triphosphate = RNA(n+1) + diphosphate. Its function is as follows. Probably involved in the RNA silencing pathway and required for the generation of small interfering RNAs (siRNAs). The chain is Probable RNA-dependent RNA polymerase 3 (RDR3) from Arabidopsis thaliana (Mouse-ear cress).